The primary structure comprises 174 residues: SUSHI domain-containing protein E3 (174 aa).

Residues 1–20 form the signal peptide; it reads MATEVQFACALVVLLGCGYA. In terms of domain architecture, Sushi spans 35–97; the sequence is QNCTTYPSIE…WTNGPPSCVK (63 aa). Intrachain disulfides connect Cys-37–Cys-78 and Cys-64–Cys-95. A compositionally biased stretch (low complexity) spans 108 to 127; that stretch reads STSTTPVTTGTFPDPQNTTH. The tract at residues 108 to 133 is disordered; the sequence is STSTTPVTTGTFPDPQNTTHPTHHTV. The helical transmembrane segment at 145–165 threads the bilayer; it reads FGYTPWAIITLVVIILLVVWI.

The protein resides in the host membrane. This chain is SUSHI domain-containing protein E3 (E3), found in Equine herpesvirus 2 (strain 86/87) (EHV-2).